A 258-amino-acid chain; its full sequence is Short-chain dehydrogenase/reductase olcF (258 aa).

Valine 12, aspartate 58, and arginine 120 together coordinate NADP(+). Serine 138 (proton donor) is an active-site residue. NADP(+) is bound by residues tyrosine 152, lysine 156, and valine 185. Tyrosine 152 functions as the Proton acceptor in the catalytic mechanism. Lysine 156 functions as the Lowers pKa of active site Tyr in the catalytic mechanism.

Belongs to the short-chain dehydrogenases/reductases (SDR) family.

It participates in secondary metabolite biosynthesis; terpenoid biosynthesis. In terms of biological role, short-chain dehydrogenase/reductase; part of the gene cluster that mediates the biosynthesis of 15-deoxyoxalicine B. The first step of the pathway is the synthesis of nicotinyl-CoA from nicotinic acid by the nicotinic acid-CoA ligase olcI. Nicotinyl-CoA is then a substrate of polyketide synthase olcA to produce 4-hydroxy-6-(3-pyridinyl)-2H-pyran-2-one (HPPO) which is further prenylated by the polyprenyl transferase olcH to yield geranylgeranyl-HPPO. Geranylgeranyl pyrophosphate is provided by the cluster-specific geranylgeranyl pyrophosphate synthase olcC. The FAD-dependent monooxygenase olcE catalyzes the epoxidation of geranylgeranyl-HPPO and the terpene cyclase olcD catalyzes the cyclization of the terpenoid component, resulting in the formation of the tricyclic terpene moiety seen in predecaturin E. The cytochrome P450 monooxygenase then catalyzes the allylic oxidation of predecaturin E, which is followed by spirocylization with concomitant loss of one molecule of water to form decaturin E. Decaturin E is the substrate of the cytochrome P450 monooxygenase olcJ which hydroxylates it at the C-29 position to form decaturin F. The short-chain dehydrogenase/reductase olcF may catalyze the oxidation of decaturin F to generate the 29-hydroxyl-27-one intermediate, and subsequent hemiacetal formation probably leads to the formation of decaturin C. The dioxygenase olcK may be a peroxisomal enzyme that catalyzes the hydroxylation of decaturin C into decaturin A once decaturin C is shuttled into the peroxisome by the MFS transporter olcL. Finally the cytochrome P450 monooxygenase olcB catalyzes the oxidative rearrangement to yield 15-deoxyoxalicine B. In the absence of olcJ, decaturin E may be shunted to a pathway in which it is oxidized to a ketone, possibly by olcF, to form decaturin D, which undergoes further allylic oxidation to yield decaturin G. Moreover, in the absence of oclK or oclL, oclB can convert decaturin C into 15-deoxyoxalicine A. This is Short-chain dehydrogenase/reductase olcF from Penicillium canescens.